The sequence spans 319 residues: Olfactory receptor 8K1 (319 aa).

At 1-31 the chain is on the extracellular side; the sequence is MNHVVKHNHTAVTKVTEFILMGITDNPGLQA. Asn8 carries an N-linked (GlcNAc...) asparagine glycan. Residues 32 to 52 traverse the membrane as a helical segment; sequence PLFGLFLIIYLVTVIGNLGMV. Over 53 to 60 the chain is Cytoplasmic; it reads ILTYLDSK. Residues 61–81 traverse the membrane as a helical segment; it reads LHTPMYFFLRHLSITDLGYST. The Extracellular portion of the chain corresponds to 82-105; the sequence is VIAPKMLVNFIVHKNTISYNWYAT. A helical membrane pass occupies residues 106–126; that stretch reads QLAFFEIFIISELFILSAMAY. Over 127-145 the chain is Cytoplasmic; the sequence is DRYVAICKPLLYVIIMAEK. A helical transmembrane segment spans residues 146-166; that stretch reads VLWVLVIVPYLYSTFVSLFLT. At 167–203 the chain is on the extracellular side; it reads IKLFKLSFCGSNIISYFYCDCIPLMSILCSDTNELEL. Residues 204–223 traverse the membrane as a helical segment; it reads IILIFSGCNLLFSLSIVLIS. Residues 224–243 lie on the Cytoplasmic side of the membrane; it reads YMFILVAILRMNSRKGRYKA. A helical transmembrane segment spans residues 244–264; that stretch reads FSTCSSHLTVVIMFYGTLLFI. Over 265–277 the chain is Extracellular; it reads YLQPKSSHTLAID. The helical transmembrane segment at 278 to 298 threads the bilayer; it reads KMASVFYTLLIPMLNPLIYSL. The Cytoplasmic segment spans residues 299 to 319; the sequence is RNKEVKDALKRTLTNRFKIPI.

The protein belongs to the G-protein coupled receptor 1 family.

It is found in the cell membrane. Its function is as follows. Odorant receptor. The chain is Olfactory receptor 8K1 (OR8K1) from Homo sapiens (Human).